A 156-amino-acid chain; its full sequence is 3-dehydroquinate dehydratase 1 (156 aa).

Y32 (proton acceptor) is an active-site residue. N84, H90, and D97 together coordinate substrate. Catalysis depends on H110, which acts as the Proton donor. Substrate is bound by residues 111–112 and R121; that span reads LS.

Belongs to the type-II 3-dehydroquinase family. In terms of assembly, homododecamer.

The enzyme catalyses 3-dehydroquinate = 3-dehydroshikimate + H2O. Its pathway is metabolic intermediate biosynthesis; chorismate biosynthesis; chorismate from D-erythrose 4-phosphate and phosphoenolpyruvate: step 3/7. In terms of biological role, catalyzes a trans-dehydration via an enolate intermediate. The polypeptide is 3-dehydroquinate dehydratase 1 (aroQ1) (Ralstonia nicotianae (strain ATCC BAA-1114 / GMI1000) (Ralstonia solanacearum)).